A 173-amino-acid chain; its full sequence is NEDD4-binding protein 2-like 1 (173 aa).

The interval 1 to 35 is disordered; that stretch reads MEESFLESFGRLSLRQQQPPPPRPPAPPPLRGTPP. Residues 18–32 are compositionally biased toward pro residues; sequence QPPPPRPPAPPPLRG.

In terms of assembly, interacts with dynactin subunit proteins, including DCTN4, DCTN5 and DCTN5.

Might play a role in adipocyte differentiation and triglyceride accumulation. The polypeptide is NEDD4-binding protein 2-like 1 (N4BP2L1) (Bos taurus (Bovine)).